The sequence spans 108 residues: Cytochrome c (108 aa).

Positions 19, 22, 23, and 85 each coordinate heme c.

It belongs to the cytochrome c family. Post-translationally, binds 1 heme c group covalently per subunit.

Its subcellular location is the mitochondrion intermembrane space. Its function is as follows. Electron carrier protein. The oxidized form of the cytochrome c heme group can accept an electron from the heme group of the cytochrome c1 subunit of cytochrome reductase. Cytochrome c then transfers this electron to the cytochrome oxidase complex, the final protein carrier in the mitochondrial electron-transport chain. The sequence is that of Cytochrome c from Stellaria longipes (Longstalk starwort).